A 355-amino-acid polypeptide reads, in one-letter code: Neurogenic differentiation factor 1 (355 aa).

Residues 1–93 are disordered; the sequence is MTKSYSESGL…GPKKKKMTKA (93 aa). Over residues 58–77 the composition is skewed to acidic residues; it reads DEEDEDEDLEEEDEEEEEDD. The segment covering 80 to 92 has biased composition (basic residues); that stretch reads PKRRGPKKKKMTK. Residues 86-92 carry the Nuclear localization signal motif; the sequence is KKKKMTK. One can recognise a bHLH domain in the interval 100 to 152; it reads LRRMKANARERNRMHGLNAALDNLRKVVPCYSKTQKLSKIETLRLAKNYIWAL. Phosphoserine occurs at positions 161, 258, 265, and 273. Serine 334 carries the phosphoserine; by CaMK2 modification.

Efficient DNA-binding requires dimerization with another bHLH protein. Heterodimer with TCF3/E47; the heterodimer is inhibited in presence of ID2, but not NR0B2, to E-box element. Interacts with EP300; the interaction is inhibited by NR0B2. Interacts with RREB1. Interacts with ATOH8. Post-translationally, phosphorylated. In islet cells, phosphorylated on Ser-273 upon glucose stimulation; which may be required for nuclear localization. In activated neurons, phosphorylated on Ser-334; which promotes dendritic growth. Phosphorylated by MAPK1; phosphorylation regulates heterodimerization and DNA-binding activities. Phosphorylation on Ser-265 and Ser-273 increases transactivation on the insulin promoter in glucose-stimulated insulinoma cells. In terms of tissue distribution, most abundant in pancreatic alpha- and beta-cells, less in brain and intestine.

The protein localises to the cytoplasm. The protein resides in the nucleus. Functionally, acts as a transcriptional activator: mediates transcriptional activation by binding to E box-containing promoter consensus core sequences 5'-CANNTG-3'. Associates with the p300/CBP transcription coactivator complex to stimulate transcription of the secretin gene as well as the gene encoding the cyclin-dependent kinase inhibitor CDKN1A. Contributes to the regulation of several cell differentiation pathways, like those that promote the formation of early retinal ganglion cells, inner ear sensory neurons, granule cells forming either the cerebellum or the dentate gyrus cell layer of the hippocampus, endocrine islet cells of the pancreas and enteroendocrine cells of the small intestine. Together with PAX6 or SIX3, is required for the regulation of amacrine cell fate specification. Also required for dendrite morphogenesis and maintenance in the cerebellar cortex. Associates with chromatin to enhancer regulatory elements in genes encoding key transcriptional regulators of neurogenesis. This is Neurogenic differentiation factor 1 (NEUROD1) from Mesocricetus auratus (Golden hamster).